The sequence spans 507 residues: Protein zntA (507 aa).

Positions 1 to 18 (MSIFAYSILAGLAPLLSS) are cleaved as a signal peptide. Residue N31 is glycosylated (N-linked (GlcNAc...) asparagine). Residues 35-55 (FHILLCISAGLLFAVASLELI) form a helical membrane-spanning segment. The disordered stretch occupies residues 124–179 (GLNLNNLNQATNLDNNEEDNDNLDNDGENEIENDHDHDHQEDEGGDNDHDHESEEK). Over residues 125–137 (LNLNNLNQATNLD) the composition is skewed to low complexity. The segment covering 138 to 154 (NNEEDNDNLDNDGENEI) has biased composition (acidic residues). Residues 155-179 (ENDHDHDHQEDEGGDNDHDHESEEK) are compositionally biased toward basic and acidic residues. A helical transmembrane segment spans residues 185–205 (IPMYGIGFGFAILIIVESIFS). A disordered region spans residues 209 to 264 (GGGGGGGHHSHSHGSLSSSSSNDVISDYISNNNSNNINNNDDDNNNNNNNNDDDDD). Low complexity predominate over residues 221–258 (HGSLSSSSSNDVISDYISNNNSNNINNNDDDNNNNNNN). Residues N240, N298, N328, N342, and N351 are each glycosylated (N-linked (GlcNAc...) asparagine). The tract at residues 305 to 350 (PNIASPVMNKDNNNNDKDKNRNSNKSDIKNSGSINNGNNSGNNNNN) is disordered. Residues 317-332 (NNNDKDKNRNSNKSDI) are compositionally biased toward basic and acidic residues. Low complexity predominate over residues 333-350 (KNSGSINNGNNSGNNNNN). Transmembrane regions (helical) follow at residues 355–375 (LTITTFIALSIHSFVDGVVIS), 388–408 (VALAIVIHKIPDGLVLSSLIL), 422–442 (FFYFLLISCMTPLGSFISSFL), 451–471 (GAFVLGFGAGTFIYITSTAIL), and 486–506 (LFSIFLGYLLFIFLDSQFHGA).

It belongs to the ZIP transporter (TC 2.A.5) family.

The protein resides in the membrane. May transport divalent cations. May participate, with dstA, in the regulation of the differentiation of stalk cells during development. This chain is Protein zntA (zntA), found in Dictyostelium discoideum (Social amoeba).